Consider the following 232-residue polypeptide: Probable transcriptional regulatory protein Bd1964 (232 aa).

The protein belongs to the TACO1 family.

It is found in the cytoplasm. This is Probable transcriptional regulatory protein Bd1964 from Bdellovibrio bacteriovorus (strain ATCC 15356 / DSM 50701 / NCIMB 9529 / HD100).